Reading from the N-terminus, the 64-residue chain is MMITRGWEGWGRRGARGAGTGTGLGGPGTPESSVTPPEFPLPPATRITPNFPNTLDPAISRSSS.

The disordered stretch occupies residues 1–64 (MMITRGWEGW…LDPAISRSSS (64 aa)). Gly residues predominate over residues 16–28 (RGAGTGTGLGGPG).

This is an uncharacterized protein from Homo sapiens (Human).